The following is a 155-amino-acid chain: Transcriptional repressor NrdR (155 aa).

A zinc finger spans residues 3-34 (CPFCGHSSTQVLDSRVSEDGDTVRRRRRCEAC). Positions 49 to 139 (PAIVKKNGSR…VYRSFEDVSE (91 aa)) constitute an ATP-cone domain.

Belongs to the NrdR family. Zn(2+) serves as cofactor.

Functionally, negatively regulates transcription of bacterial ribonucleotide reductase nrd genes and operons by binding to NrdR-boxes. This Cupriavidus metallidurans (strain ATCC 43123 / DSM 2839 / NBRC 102507 / CH34) (Ralstonia metallidurans) protein is Transcriptional repressor NrdR.